We begin with the raw amino-acid sequence, 275 residues long: Large ribosomal subunit protein uL2 (275 aa).

The segment at 222 to 257 (GTAMNAVDHPHGGGRGRSKGNNQPRSPWNQPAKGFK) is disordered. Residues 240–250 (KGNNQPRSPWN) are compositionally biased toward polar residues.

It belongs to the universal ribosomal protein uL2 family. As to quaternary structure, part of the 50S ribosomal subunit. Forms a bridge to the 30S subunit in the 70S ribosome.

In terms of biological role, one of the primary rRNA binding proteins. Required for association of the 30S and 50S subunits to form the 70S ribosome, for tRNA binding and peptide bond formation. It has been suggested to have peptidyltransferase activity; this is somewhat controversial. Makes several contacts with the 16S rRNA in the 70S ribosome. This Endomicrobium trichonymphae protein is Large ribosomal subunit protein uL2.